The following is a 503-amino-acid chain: Protein FAM124A (503 aa).

The disordered stretch occupies residues 434–470; sequence LAQSDTVPGRQNHSSDSLHSVSDISSSPCPVFPSTPA. The span at 436–445 shows a compositional bias: polar residues; sequence QSDTVPGRQN. Over residues 447–460 the composition is skewed to low complexity; it reads SSDSLHSVSDISSS.

It belongs to the FAM124 family.

The sequence is that of Protein FAM124A (fam124a) from Xenopus tropicalis (Western clawed frog).